The following is a 263-amino-acid chain: Chymotrypsinogen B2 (263 aa).

The N-terminal stretch at 1–18 (MAFLWLLSCWALLGTTFG) is a signal peptide. Cystine bridges form between Cys-19-Cys-140, Cys-60-Cys-76, Cys-154-Cys-219, Cys-186-Cys-200, and Cys-209-Cys-238. Residues 34–261 (IVNGEDAVPG…LIPWVQKILA (228 aa)) enclose the Peptidase S1 domain. Catalysis depends on charge relay system residues His-75 and Asp-120. Ser-213 serves as the catalytic Charge relay system.

It belongs to the peptidase S1 family.

The protein resides in the secreted. It localises to the extracellular space. The catalysed reaction is Preferential cleavage: Tyr-|-Xaa, Trp-|-Xaa, Phe-|-Xaa, Leu-|-Xaa.. The polypeptide is Chymotrypsinogen B2 (CTRB2) (Homo sapiens (Human)).